We begin with the raw amino-acid sequence, 93 residues long: Conotoxin F_Vc1 (93 aa).

An N-terminal signal peptide occupies residues 1–22; that stretch reads MQRGAVLLGVVAFLALWPQAGA. Positions 23–33 are excised as a propeptide; sequence EPYNLNDPDVR.

The protein belongs to the conotoxin F superfamily. In terms of processing, contains 4 disulfide bonds. In terms of tissue distribution, expressed by the venom duct.

It is found in the secreted. The sequence is that of Conotoxin F_Vc1 from Conus victoriae (Queen Victoria cone).